The primary structure comprises 684 residues: MTVPATDSWPAPIRVPAGTTAAAAVRDAGLPGRGAPDAVVVVRDASGTLRDLSWVPDTDAEVVPVAANTDEGRSVIRHSAAHVLAQAVQELFPQAKLGIGPPITDGFYYDFDVPEPFTPEDLDKLEKRMRQIVKEGQLFSRRVYESKEQARAELAGEPYKLELVDDKSGDPDIMEVGGDELTAYDNLNPRTRERVWGDLCRGPHIPTTRHIPAFKLTRSSAAYWRGDQNNASLQRIYGTAWESQEALDDHLRLIEEAQRRDHRKLGSELDLFSFPDEIGSGLAVFHPRGGVVRRELEEYSRRKHIEAGYEFVNTPHITKAQLFHTSGHLDWYADGMFPPMHLDAEYDDDGTVRKPGQDYYLKPMNCPMHTLIYRSRGRSYRELPLRLFEFGTVYRYEKSGVVHGLTRARGFTMDDSHIFCTREQLHGELASLLRFVLELLGDYGLTDFYLELSTKDPDKFVGSDEMWEQATTSLADVAAESGLELVPDPGGAAFYGPKISVQARDALGRSWQMSTIQVDFNFPERFELEYTASDGTRQRPVMIHRALFGSIERFFGILTEHYAGAFPAWLAPVQAVGIPVADEHVPYLESVAAQLKSHGVRVEVDASDDRMAKKIVHHTAQKVPFMLLAGDRDVAAGAVSFRFGDRTQINGVPRDSAVDAIVKWIADRENSVPSAELVKVSSGE.

The region spanning 1–66 is the TGS domain; the sequence is MTVPATDSWP…DTDAEVVPVA (66 aa). Positions 261–567 are catalytic; it reads DHRKLGSELD…LTEHYAGAFP (307 aa). Cys-366, His-417, and His-544 together coordinate Zn(2+).

This sequence belongs to the class-II aminoacyl-tRNA synthetase family. In terms of assembly, homodimer. Zn(2+) serves as cofactor.

It is found in the cytoplasm. The enzyme catalyses tRNA(Thr) + L-threonine + ATP = L-threonyl-tRNA(Thr) + AMP + diphosphate + H(+). Its function is as follows. Catalyzes the attachment of threonine to tRNA(Thr) in a two-step reaction: L-threonine is first activated by ATP to form Thr-AMP and then transferred to the acceptor end of tRNA(Thr). Also edits incorrectly charged L-seryl-tRNA(Thr). In Mycobacterium avium (strain 104), this protein is Threonine--tRNA ligase.